Here is a 206-residue protein sequence, read N- to C-terminus: Large ribosomal subunit protein uL4 (206 aa).

This sequence belongs to the universal ribosomal protein uL4 family. In terms of assembly, part of the 50S ribosomal subunit.

Functionally, one of the primary rRNA binding proteins, this protein initially binds near the 5'-end of the 23S rRNA. It is important during the early stages of 50S assembly. It makes multiple contacts with different domains of the 23S rRNA in the assembled 50S subunit and ribosome. Its function is as follows. Forms part of the polypeptide exit tunnel. This Bradyrhizobium diazoefficiens (strain JCM 10833 / BCRC 13528 / IAM 13628 / NBRC 14792 / USDA 110) protein is Large ribosomal subunit protein uL4.